Consider the following 192-residue polypeptide: Peptidyl-tRNA hydrolase (192 aa).

Tyr18 contacts tRNA. Residue His23 is the Proton acceptor of the active site. Positions 69, 71, and 117 each coordinate tRNA.

This sequence belongs to the PTH family. In terms of assembly, monomer.

It localises to the cytoplasm. It carries out the reaction an N-acyl-L-alpha-aminoacyl-tRNA + H2O = an N-acyl-L-amino acid + a tRNA + H(+). Its function is as follows. Hydrolyzes ribosome-free peptidyl-tRNAs (with 1 or more amino acids incorporated), which drop off the ribosome during protein synthesis, or as a result of ribosome stalling. Catalyzes the release of premature peptidyl moieties from peptidyl-tRNA molecules trapped in stalled 50S ribosomal subunits, and thus maintains levels of free tRNAs and 50S ribosomes. The chain is Peptidyl-tRNA hydrolase from Neisseria meningitidis serogroup C (strain 053442).